The primary structure comprises 217 residues: 3,4-dihydroxy-2-butanone 4-phosphate synthase (217 aa).

D-ribulose 5-phosphate-binding positions include 37–38, Asp42, 150–154, and Glu174; these read RE and RRGHT. Glu38 is a binding site for Mg(2+). Position 153 (His153) interacts with Mg(2+).

The protein belongs to the DHBP synthase family. Homodimer. Requires Mg(2+) as cofactor. The cofactor is Mn(2+).

It catalyses the reaction D-ribulose 5-phosphate = (2S)-2-hydroxy-3-oxobutyl phosphate + formate + H(+). The protein operates within cofactor biosynthesis; riboflavin biosynthesis; 2-hydroxy-3-oxobutyl phosphate from D-ribulose 5-phosphate: step 1/1. Functionally, catalyzes the conversion of D-ribulose 5-phosphate to formate and 3,4-dihydroxy-2-butanone 4-phosphate. The polypeptide is 3,4-dihydroxy-2-butanone 4-phosphate synthase (Tolumonas auensis (strain DSM 9187 / NBRC 110442 / TA 4)).